The following is an 87-amino-acid chain: NADH dehydrogenase [ubiquinone] 1 alpha subcomplex subunit 4-like 2 (87 aa).

The protein belongs to the complex I NDUFA4 subunit family.

This Bos taurus (Bovine) protein is NADH dehydrogenase [ubiquinone] 1 alpha subcomplex subunit 4-like 2 (NDUFA4L2).